Here is a 668-residue protein sequence, read N- to C-terminus: MARPAAVRVLWALLLPLLLGSARGLRNASQRTFTIDYSHNRFLKDGQPFRYISGSIHYSRVPRFYWKDRLLKMKMAGLNAIQTYVPWNFHEPQPGQYQFSGEQDVEYFIKLAHELGLLVILRPGPYICAEWDMGGLPAWLLLKESIILRSSDPDYLAAVDKWLGVLLPKMKPLLYQNGGPIITMQVENEYGSYFTCDYDYLRFLQKLFHHHLGNDVLLFTTDGANEKFLQCGALQGLYATVDFGPGANITAAFQIQRKSEPKGPLVNSEFYTGWLDHWGQPHSTVRTEVVASSLHDILAHGANVNLYMFIGGTNFAYWNGANMPYQAQPTSYDYDAPLSEAGDLTEKYFALREVIRKFEKVPEGFIPPSTPKFAYGKVALKKLKTVEEALNVLCPPGPINSLYPLTFIQVKQYFGFVMYRTTLPQDCSDPTPLSSPLSGVHDRAYVSVDGVPQGVMERSNVITLNITGKAGATLDLLVENMGRVNYGRYINDFKGLISNLTLGSSILTNWMIFPLNTEDAVRSHLGGWHGPNNGRHDKTFAHRSSNYTLPAFYMGNFSIPSGIPDLPQDTFIQFPGWTKGQVWINGFNLGRYWPARGPQMTLFVPRHILVTSTPNTIMVLELEHAPCGDSGPEVCTVEFVDRPVIGAPPTPGHPPPDLSHRDLRLDYV.

Positions 1 to 24 (MARPAAVRVLWALLLPLLLGSARG) are cleaved as a signal peptide. Positions 25–29 (LRNAS) are excised as a propeptide. Positions 84, 130, and 188 each coordinate substrate. Glu189 serves as the catalytic Proton donor. An intrachain disulfide couples Cys196 to Cys231. An N-linked (GlcNAc...) asparagine glycan is attached at Asn248. Glu269 (nucleophile) is an active-site residue. Substrate is bound at residue Tyr334. 4 N-linked (GlcNAc...) asparagine glycosylation sites follow: Asn465, Asn499, Asn546, and Asn556. Cysteines 627 and 635 form a disulfide.

Belongs to the glycosyl hydrolase 35 family. As to quaternary structure, homodimer. May form higher multimers.

The protein localises to the lysosome. The catalysed reaction is Hydrolysis of terminal non-reducing beta-D-galactose residues in beta-D-galactosides.. Functionally, cleaves beta-linked terminal galactosyl residues from gangliosides, glycoproteins, and glycosaminoglycans. This Canis lupus familiaris (Dog) protein is Beta-galactosidase (GLB1).